Reading from the N-terminus, the 121-residue chain is Type II secretion system protein I (121 aa).

Positions 1-6 (MNKQKG) are cleaved as a propeptide — leader sequence. Methionine 7 carries the N-methylmethionine modification. A helical membrane pass occupies residues 7-27 (MTLLEVLVALAIFSLAGLTLL).

It belongs to the GSP I family. As to quaternary structure, type II secretion is composed of four main components: the outer membrane complex, the inner membrane complex, the cytoplasmic secretion ATPase and the periplasm-spanning pseudopilus. Interacts with core component PulG. Interacts with pseudopilins PulJ and PulK. Cleaved by prepilin peptidase. In terms of processing, methylated by prepilin peptidase at the amino group of the N-terminal methionine once the leader sequence is cleaved by prepilin peptidase.

It is found in the cell inner membrane. Functionally, component of the type II secretion system required for the energy-dependent secretion of extracellular factors such as proteases and toxins from the periplasm. Part of the pseudopilus tip complex that is critical for the recognition and binding of secretion substrates. In Klebsiella michiganensis (strain ATCC 8724 / DSM 4798 / JCM 20051 / NBRC 3318 / NRRL B-199 / KCTC 1686 / BUCSAV 143 / CCM 1901), this protein is Type II secretion system protein I (pulI).